The primary structure comprises 384 residues: Chaperone protein DnaJ (384 aa).

The J domain occupies 5–69 (DYYKVLGVDR…QKRAQYDQFG (65 aa)). The CR-type zinc finger occupies 141–223 (GKKTQVSYTR…CGGKGTVERK (83 aa)). 8 residues coordinate Zn(2+): Cys-154, Cys-157, Cys-171, Cys-174, Cys-197, Cys-200, Cys-211, and Cys-214. CXXCXGXG motif repeat units lie at residues 154–161 (CETCGGNG), 171–178 (CDKCHGTG), 197–204 (CDKCNGRG), and 211–218 (CKTCGGKG).

Belongs to the DnaJ family. In terms of assembly, homodimer. It depends on Zn(2+) as a cofactor.

It localises to the cytoplasm. Functionally, participates actively in the response to hyperosmotic and heat shock by preventing the aggregation of stress-denatured proteins and by disaggregating proteins, also in an autonomous, DnaK-independent fashion. Unfolded proteins bind initially to DnaJ; upon interaction with the DnaJ-bound protein, DnaK hydrolyzes its bound ATP, resulting in the formation of a stable complex. GrpE releases ADP from DnaK; ATP binding to DnaK triggers the release of the substrate protein, thus completing the reaction cycle. Several rounds of ATP-dependent interactions between DnaJ, DnaK and GrpE are required for fully efficient folding. Also involved, together with DnaK and GrpE, in the DNA replication of plasmids through activation of initiation proteins. In Lactobacillus acidophilus (strain ATCC 700396 / NCK56 / N2 / NCFM), this protein is Chaperone protein DnaJ.